Consider the following 259-residue polypeptide: Polycomb group RING finger protein 1 (259 aa).

A2 carries the N-acetylalanine modification. S3 bears the Phosphoserine mark. A Glycyl lysine isopeptide (Lys-Gly) (interchain with G-Cter in SUMO2) cross-link involves residue K24. The RING-type zinc-finger motif lies at C47–N86. Positions N86 to P247 are required for repressor activity. K88 participates in a covalent cross-link: Glycyl lysine isopeptide (Lys-Gly) (interchain with G-Cter in SUMO2). Residues L150–K255 are required for the interaction with the KDM2B-SKP1 heterodimeric complex. Residues E167 to K255 form an RING-finger and WD40-associated ubiquitin-like domain (RAWUL); sufficient for interaction with BCOR and BCORL1 region.

As to quaternary structure, interacts with BCORL1, forming heterodimers. The PCGF1-BCORL1 heterodimeric complex interacts with the KDM2B-SKP1 heterodimeric complex to form a homotetrameric polycomb repression complex 1 (PRC1.1). Component of the repressive BCOR complex containing a Polycomb group subcomplex at least composed of RYBP, RING1 and RNF2/RING2. Specifically interacts with BCOR, RING1 and RNF2/RING2. Component of a PRC1-like complex. Interacts with CBX6, CBX7 and CBX8. Interacts with DPPA4, NANOG, POU5F1 and RYBP. In terms of tissue distribution, ubiquitous.

The protein resides in the nucleus. In terms of biological role, component of the Polycomb group (PcG) multiprotein BCOR complex, a complex required to maintain the transcriptionally repressive state of some genes, such as BCL6 and the cyclin-dependent kinase inhibitor, CDKN1A. Transcriptional repressor that may be targeted to the DNA by BCL6; this transcription repressor activity may be related to PKC signaling pathway. Represses CDKN1A expression by binding to its promoter, and this repression is dependent on the retinoic acid response element (RARE element). Promotes cell cycle progression and enhances cell proliferation as well. May have a positive role in tumor cell growth by down-regulating CDKN1A. Component of a Polycomb group (PcG) multiprotein PRC1-like complex, a complex class required to maintain the transcriptionally repressive state of many genes, including Hox genes, throughout development. PcG PRC1 complex acts via chromatin remodeling and modification of histones; it mediates monoubiquitination of histone H2A 'Lys-119', rendering chromatin heritably changed in its expressibility. Within the PRC1-like complex, regulates RNF2 ubiquitin ligase activity. Regulates the expression of DPPA4 and NANOG in the NT2 embryonic carcinoma cells. The sequence is that of Polycomb group RING finger protein 1 (PCGF1) from Homo sapiens (Human).